The sequence spans 231 residues: Platelet-activating factor acetylhydrolase IB subunit alpha1 (231 aa).

Ser-2 is subject to N-acetylserine. Residue Ser-2 is modified to Phosphoserine. Catalysis depends on residues Ser-47, Asp-192, and His-195.

This sequence belongs to the 'GDSL' lipolytic enzyme family. Platelet-activating factor acetylhydrolase IB beta/gamma subunits subfamily. As to quaternary structure, forms a catalytic dimer which is either homodimer (alpha1/alpha1 homodimer) or heterodimer with PAFAH1B2 (alpha1/alpha2 heterodimer). Component of the cytosolic (PAF-AH (I)) heterotetrameric enzyme, which is composed of PAFAH1B1 (beta), PAFAH1B2 (alpha2) and PAFAH1B3 (alpha1) subunits. The catalytic activity of the enzyme resides in the alpha1 (PAFAH1B3) and alpha2 (PAFAH1B2) subunits, whereas the beta subunit (PAFAH1B1) has regulatory activity. Trimer formation is not essential for the catalytic activity. Interacts with VLDLR; this interaction may modulate the Reelin pathway.

It is found in the cytoplasm. The enzyme catalyses a 1-O-alkyl-2-acetyl-sn-glycero-3-phosphocholine + H2O = a 1-O-alkyl-sn-glycero-3-phosphocholine + acetate + H(+). The catalysed reaction is 1-O-hexadecyl-2-acetyl-sn-glycero-3-phosphocholine + H2O = 1-O-hexadecyl-sn-glycero-3-phosphocholine + acetate + H(+). It catalyses the reaction 1-O-hexadecyl-2-acetyl-sn-glycero-3-phosphate + H2O = 1-O-hexadecyl-sn-glycero-3-phosphate + acetate + H(+). Beta subunit (PAFAH1B1) inhibits the acetylhydrolase activity of the alpha1/alpha1 catalytic homodimer. Alpha1 catalytic subunit of the cytosolic type I platelet-activating factor (PAF) acetylhydrolase (PAF-AH (I)) heterotetrameric enzyme that catalyzes the hydrolyze of the acetyl group at the sn-2 position of PAF and its analogs and modulates the action of PAF. The activity and substrate specificity of PAF-AH (I) are affected by its subunit composition. Both alpha1/alpha1 homodimer (PAFAH1B3/PAFAH1B3 homodimer) and alpha1/alpha2 heterodimer(PAFAH1B3/PAFAH1B2 heterodimer) hydrolyze 1-O-alkyl-2-acetyl-sn-glycero-3-phosphoric acid (AAGPA) more efficiently than PAF, but they have little hydrolytic activity towards 1-O-alkyl-2-acetyl-sn-glycero-3-phosphorylethanolamine (AAGPE). Plays an important role during the development of brain. The polypeptide is Platelet-activating factor acetylhydrolase IB subunit alpha1 (Pongo abelii (Sumatran orangutan)).